A 217-amino-acid chain; its full sequence is Uracil-DNA glycosylase (217 aa).

D62 (proton acceptor) is an active-site residue.

The protein belongs to the uracil-DNA glycosylase (UDG) superfamily. UNG family.

It localises to the cytoplasm. The catalysed reaction is Hydrolyzes single-stranded DNA or mismatched double-stranded DNA and polynucleotides, releasing free uracil.. Its function is as follows. Excises uracil residues from the DNA which can arise as a result of misincorporation of dUMP residues by DNA polymerase or due to deamination of cytosine. The protein is Uracil-DNA glycosylase of Streptococcus pyogenes serotype M4 (strain MGAS10750).